Reading from the N-terminus, the 567-residue chain is Proline--tRNA ligase (567 aa).

It belongs to the class-II aminoacyl-tRNA synthetase family. ProS type 1 subfamily. As to quaternary structure, homodimer.

It is found in the cytoplasm. The catalysed reaction is tRNA(Pro) + L-proline + ATP = L-prolyl-tRNA(Pro) + AMP + diphosphate. Catalyzes the attachment of proline to tRNA(Pro) in a two-step reaction: proline is first activated by ATP to form Pro-AMP and then transferred to the acceptor end of tRNA(Pro). As ProRS can inadvertently accommodate and process non-cognate amino acids such as alanine and cysteine, to avoid such errors it has two additional distinct editing activities against alanine. One activity is designated as 'pretransfer' editing and involves the tRNA(Pro)-independent hydrolysis of activated Ala-AMP. The other activity is designated 'posttransfer' editing and involves deacylation of mischarged Ala-tRNA(Pro). The misacylated Cys-tRNA(Pro) is not edited by ProRS. The sequence is that of Proline--tRNA ligase from Staphylococcus aureus (strain USA300).